The chain runs to 328 residues: Putative gluconeogenesis factor (328 aa).

The protein belongs to the gluconeogenesis factor family.

The protein resides in the cytoplasm. In terms of biological role, required for morphogenesis under gluconeogenic growth conditions. The protein is Putative gluconeogenesis factor of Aquifex aeolicus (strain VF5).